The following is a 172-amino-acid chain: Lytic chitin monooxygenase (172 aa).

Positions 1-30 are cleaved as a signal peptide; the sequence is MHAGRKTAVLIGAALAPVIAVSLPAASASA. The Cu cation site is built by His31 and His106. Residues 31–168 form the Chitin-binding type-4 domain; sequence HGYISNPPSR…DNAFYACIDV (138 aa).

The cofactor is Cu(2+).

It localises to the secreted. The enzyme catalyses [(1-&gt;4)-N-acetyl-beta-D-glucosaminyl]n+m + reduced acceptor + O2 = [(1-&gt;4)-N-acetyl-beta-D-glucosaminyl]m-1-(1-&gt;4)-2-(acetylamino)-2-deoxy-D-glucono-1,5-lactone + [(1-&gt;4)-N-acetyl-beta-D-glucosaminyl]n + acceptor + H2O.. It functions in the pathway glycan degradation; chitin degradation. Its function is as follows. Involved in chitin degradation. Catalyzes the oxidative cleavage of glycosidic bonds in chitin via a copper-dependent mechanism, leading to oxidized chitooligomers with degrees of polymerization of 4-6. Is not active on cellulose. The chain is Lytic chitin monooxygenase from Streptomyces ambofaciens (strain ATCC 23877 / 3486 / DSM 40053 / JCM 4204 / NBRC 12836 / NRRL B-2516).